Here is a 447-residue protein sequence, read N- to C-terminus: Serine/threonine-protein phosphatase 2A 55 kDa regulatory subunit B delta isoform (447 aa).

WD repeat units lie at residues Ala26–Pro65, Glu91–Glu132, Ala175–Asn213, Glu224–Arg264, Glu283–Glu321, Glu338–Leu379, and Asp414–Asn447.

The protein belongs to the phosphatase 2A regulatory subunit B family. PP2A consists of a common heterodimeric core enzyme, composed of a 36 kDa catalytic subunit (subunit C) and a 65 kDa constant regulatory subunit (PR65 or subunit A), that associates with a variety of regulatory subunits. Proteins that associate with the core dimer include three families of regulatory subunits B (the R2/B/PR55/B55, R3/B''/PR72/PR130/PR59 and R5/B'/B56 families), the 48 kDa variable regulatory subunit, viral proteins, and cell signaling molecules. Interacts with ensa (when phosphorylated at 'Ser-67') and arpp19 (when phosphorylated at 'Ser-67'), leading to inhibit PP2A activity.

Its subcellular location is the cytoplasm. In terms of biological role, substrate-recognition subunit of protein phosphatase 2A (PP2A) that plays a key role in cell cycle by controlling mitosis entry and exit. The activity of PP2A complexes containing ppp2r2d (PR55-delta) fluctuate during the cell cycle: the activity is high in interphase and low in mitosis. During mitosis, activity of PP2A is inhibited via interaction with phosphorylated ensa and arpp19 inhibitors. PP2A complexes containing ppp2r2d (PR55-delta) also regulate the activity of TGF-beta/Activin/Nodal signaling by restricting receptor activity. Within the PP2A complexes, the B regulatory subunits modulate substrate selectivity and catalytic activity, and may also direct the localization of the catalytic enzyme to a particular subcellular compartment. This chain is Serine/threonine-protein phosphatase 2A 55 kDa regulatory subunit B delta isoform (ppp2r2d), found in Xenopus tropicalis (Western clawed frog).